A 584-amino-acid polypeptide reads, in one-letter code: Chaperonin GroEL 1 (584 aa).

Residues 29–32, 86–90, glycine 413, and aspartate 492 contribute to the ATP site; these read TIGP and DGTTT. The disordered stretch occupies residues 523-542; the sequence is EPEAAAPGGPGGDPMGGMGG. Over residues 530 to 542 the composition is skewed to gly residues; the sequence is GGPGGDPMGGMGG.

It belongs to the chaperonin (HSP60) family. Forms a cylinder of 14 subunits composed of two heptameric rings stacked back-to-back. Interacts with the co-chaperonin GroES.

The protein resides in the cytoplasm. The enzyme catalyses ATP + H2O + a folded polypeptide = ADP + phosphate + an unfolded polypeptide.. Its function is as follows. Together with its co-chaperonin GroES, plays an essential role in assisting protein folding. The GroEL-GroES system forms a nano-cage that allows encapsulation of the non-native substrate proteins and provides a physical environment optimized to promote and accelerate protein folding. The protein is Chaperonin GroEL 1 of Prochlorococcus marinus (strain MIT 9312).